The primary structure comprises 538 residues: Chaperonin GroEL (538 aa).

Residues 29–32 (TIGP), 86–90 (DGTTT), glycine 413, 476–478 (NAA), and aspartate 492 each bind ATP.

It belongs to the chaperonin (HSP60) family. As to quaternary structure, forms a cylinder of 14 subunits composed of two heptameric rings stacked back-to-back. Interacts with the co-chaperonin GroES.

It localises to the cytoplasm. It carries out the reaction ATP + H2O + a folded polypeptide = ADP + phosphate + an unfolded polypeptide.. Functionally, together with its co-chaperonin GroES, plays an essential role in assisting protein folding. The GroEL-GroES system forms a nano-cage that allows encapsulation of the non-native substrate proteins and provides a physical environment optimized to promote and accelerate protein folding. The protein is Chaperonin GroEL of Staphylococcus aureus (strain MRSA252).